The following is a 106-amino-acid chain: Phosphoribosyl-ATP pyrophosphatase (106 aa).

Belongs to the PRA-PH family.

The protein resides in the cytoplasm. The enzyme catalyses 1-(5-phospho-beta-D-ribosyl)-ATP + H2O = 1-(5-phospho-beta-D-ribosyl)-5'-AMP + diphosphate + H(+). Its pathway is amino-acid biosynthesis; L-histidine biosynthesis; L-histidine from 5-phospho-alpha-D-ribose 1-diphosphate: step 2/9. The chain is Phosphoribosyl-ATP pyrophosphatase from Limosilactobacillus fermentum (strain NBRC 3956 / LMG 18251) (Lactobacillus fermentum).